The chain runs to 209 residues: Eukaryotic translation initiation factor 4E (209 aa).

This sequence belongs to the eukaryotic initiation factor 4E family. As to quaternary structure, eIF4F is a multi-subunit complex, the composition of which varies with external and internal environmental conditions. It is composed of at least eIF4A, eIF4E and eIF4G. eIF4E is also known to interact with other partners.

Functionally, recognizes and binds the 7-methylguanosine-containing mRNA cap during an early step in the initiation of protein synthesis and facilitates ribosome binding by inducing the unwinding of the mRNAs secondary structures. In Candida glabrata (strain ATCC 2001 / BCRC 20586 / JCM 3761 / NBRC 0622 / NRRL Y-65 / CBS 138) (Yeast), this protein is Eukaryotic translation initiation factor 4E (TIF45).